The following is a 402-amino-acid chain: NADH-quinone oxidoreductase subunit D (402 aa).

It belongs to the complex I 49 kDa subunit family. In terms of assembly, NDH-1 is composed of 14 different subunits. Subunits NuoB, C, D, E, F, and G constitute the peripheral sector of the complex.

The protein resides in the cell inner membrane. The catalysed reaction is a quinone + NADH + 5 H(+)(in) = a quinol + NAD(+) + 4 H(+)(out). Functionally, NDH-1 shuttles electrons from NADH, via FMN and iron-sulfur (Fe-S) centers, to quinones in the respiratory chain. The immediate electron acceptor for the enzyme in this species is believed to be ubiquinone. Couples the redox reaction to proton translocation (for every two electrons transferred, four hydrogen ions are translocated across the cytoplasmic membrane), and thus conserves the redox energy in a proton gradient. This is NADH-quinone oxidoreductase subunit D from Cereibacter sphaeroides (strain ATCC 17029 / ATH 2.4.9) (Rhodobacter sphaeroides).